A 269-amino-acid polypeptide reads, in one-letter code: Energy-coupling factor transporter transmembrane protein EcfT (269 aa).

Helical transmembrane passes span 28–48 (MIIY…LLLL), 49–69 (AFTL…FNGV), 73–93 (IGII…GSVL), 109–129 (AILI…LTLT), and 246–266 (TLAI…KSPS).

It belongs to the energy-coupling factor EcfT family. Forms a stable energy-coupling factor (ECF) transporter complex composed of 2 membrane-embedded substrate-binding proteins (S component), 2 ATP-binding proteins (A component) and 2 transmembrane proteins (T component). May be able to interact with more than 1 S component at a time.

Its subcellular location is the cell membrane. In terms of biological role, transmembrane (T) component of an energy-coupling factor (ECF) ABC-transporter complex. Unlike classic ABC transporters this ECF transporter provides the energy necessary to transport a number of different substrates. In Streptococcus equi subsp. equi (strain 4047), this protein is Energy-coupling factor transporter transmembrane protein EcfT.